Reading from the N-terminus, the 534-residue chain is MEDGTQVSTLERVIKEVQAPALSTPTDEMFWSPEDPSKPNLQFLKQHFYREGRLTEEQALWIIHAGTQILRSEPNLLEMDAPITVCGDVHGQYYDLMKLFEVGGDPSETRYLFLGDYVDRGYFSIECVLYLWALKIWYPNSLWLLRGNHECRHLTDYFTFKLECKHKYSERIYEACIESFCALPLAAVMNKQFLCIHGGLSPELHTLEDIKSIDRFREPPTHGLMCDILWADPLEEFGQEKTGDYFVHNSVRGCSYFFSYPAACAFLEKNNLLSIIRAHEAQDAGYRMYRKTRTTGFPSVMTIFSAPNYLDVYNNKAAVLKYENNVMNIRQFNCTPHPYWLPNFMDVFTWSLPFVGEKITDMLIAILNTCSKEELEDETPTSVSPSAPSPPLPMDVESSEFKRRAIKNKILAIGRLSRVFQVLREESERVTELKTAAGGRLPAGTLMLGAEGIKQAITNFEDARKVDLQNERLPPSHEEVIKRSEEERRAALERAQQEADNDTGLATVARRISMSAGSGRSRRQRDAARETREA.

3 residues coordinate Fe cation: Asp-88, His-90, and Asp-116. Zn(2+)-binding residues include Asp-116 and Asn-148. Residue His-149 is the Proton donor of the active site. Zn(2+) contacts are provided by His-197 and His-279. 2 disordered regions span residues 375 to 398 (LEDETPTSVSPSAPSPPLPMDVES) and 475 to 534 (PSHE…TREA). 2 stretches are compositionally biased toward basic and acidic residues: residues 475-497 (PSHEEVIKRSEEERRAALERAQQ) and 524-534 (QRDAARETREA).

The protein belongs to the PPP phosphatase family. PP-2B subfamily. Composed of two components (A and B), the A component is the catalytic subunit and the B component confers calcium sensitivity. Requires Fe(3+) as cofactor. It depends on Zn(2+) as a cofactor.

It catalyses the reaction O-phospho-L-seryl-[protein] + H2O = L-seryl-[protein] + phosphate. It carries out the reaction O-phospho-L-threonyl-[protein] + H2O = L-threonyl-[protein] + phosphate. In terms of biological role, calcium-dependent, calmodulin-stimulated protein phosphatase. This subunit may have a role in the calmodulin activation of calcineurin. This is Serine/threonine-protein phosphatase 2B catalytic subunit (cnaA) from Aspergillus fumigatus (strain ATCC MYA-4609 / CBS 101355 / FGSC A1100 / Af293) (Neosartorya fumigata).